The chain runs to 191 residues: Ribosome maturation factor RimM (191 aa).

Positions 114-191 (EDEYYWVDLI…RIVVDWQPDY (78 aa)) constitute a PRC barrel domain.

It belongs to the RimM family. As to quaternary structure, binds ribosomal protein uS19.

Its subcellular location is the cytoplasm. An accessory protein needed during the final step in the assembly of 30S ribosomal subunit, possibly for assembly of the head region. Essential for efficient processing of 16S rRNA. May be needed both before and after RbfA during the maturation of 16S rRNA. It has affinity for free ribosomal 30S subunits but not for 70S ribosomes. The protein is Ribosome maturation factor RimM of Paracidovorax citrulli (strain AAC00-1) (Acidovorax citrulli).